Consider the following 534-residue polypeptide: Glutamyl-tRNA(Gln) amidotransferase subunit B, mitochondrial (534 aa).

The N-terminal 28 residues, 1–28 (MTVLCRLRHCHLSTPTLCRRFHDARVYK), are a transit peptide targeting the mitochondrion.

This sequence belongs to the GatB/GatE family. GatB subfamily. As to quaternary structure, subunit of the heterotrimeric GatCAB amidotransferase (AdT) complex, composed of A, B and C subunits.

The protein localises to the mitochondrion. The enzyme catalyses L-glutamyl-tRNA(Gln) + L-glutamine + ATP + H2O = L-glutaminyl-tRNA(Gln) + L-glutamate + ADP + phosphate + H(+). Functionally, allows the formation of correctly charged Gln-tRNA(Gln) through the transamidation of misacylated Glu-tRNA(Gln) in the mitochondria. The reaction takes place in the presence of glutamine and ATP through an activated gamma-phospho-Glu-tRNA(Gln). This chain is Glutamyl-tRNA(Gln) amidotransferase subunit B, mitochondrial, found in Laccaria bicolor (strain S238N-H82 / ATCC MYA-4686) (Bicoloured deceiver).